The sequence spans 317 residues: Acetyl-coenzyme A carboxylase carboxyl transferase subunit alpha (317 aa).

A CoA carboxyltransferase C-terminal domain is found at 31–292 (RFEPELAQLE…DKALWATLTS (262 aa)).

This sequence belongs to the AccA family. In terms of assembly, acetyl-CoA carboxylase is a heterohexamer composed of biotin carboxyl carrier protein (AccB), biotin carboxylase (AccC) and two subunits each of ACCase subunit alpha (AccA) and ACCase subunit beta (AccD).

It is found in the cytoplasm. The enzyme catalyses N(6)-carboxybiotinyl-L-lysyl-[protein] + acetyl-CoA = N(6)-biotinyl-L-lysyl-[protein] + malonyl-CoA. The protein operates within lipid metabolism; malonyl-CoA biosynthesis; malonyl-CoA from acetyl-CoA: step 1/1. Component of the acetyl coenzyme A carboxylase (ACC) complex. First, biotin carboxylase catalyzes the carboxylation of biotin on its carrier protein (BCCP) and then the CO(2) group is transferred by the carboxyltransferase to acetyl-CoA to form malonyl-CoA. The protein is Acetyl-coenzyme A carboxylase carboxyl transferase subunit alpha of Sorangium cellulosum (strain So ce56) (Polyangium cellulosum (strain So ce56)).